The chain runs to 635 residues: Chaperone protein HtpG (635 aa).

The segment at M1–R346 is a; substrate-binding. Residues E347–R563 form a b region. The c stretch occupies residues M564–A635.

This sequence belongs to the heat shock protein 90 family. Homodimer.

It localises to the cytoplasm. Its function is as follows. Molecular chaperone. Has ATPase activity. In Bordetella parapertussis (strain 12822 / ATCC BAA-587 / NCTC 13253), this protein is Chaperone protein HtpG.